The following is a 37-amino-acid chain: Large ribosomal subunit protein bL36 (37 aa).

This sequence belongs to the bacterial ribosomal protein bL36 family.

The polypeptide is Large ribosomal subunit protein bL36 (Nitratiruptor sp. (strain SB155-2)).